The primary structure comprises 316 residues: Olfactory receptor 10H3 (316 aa).

Topologically, residues Met1 to Leu25 are extracellular. The helical transmembrane segment at Pro26–Ile46 threads the bilayer. The Cytoplasmic segment spans residues Met47–Arg54. The chain crosses the membrane as a helical span at residues Arg55–Thr75. The Extracellular portion of the chain corresponds to Val76–Ala99. The cysteines at positions 98 and 190 are disulfide-linked. The helical transmembrane segment at Ile100–Gly120 threads the bilayer. The Cytoplasmic portion of the chain corresponds to Tyr121–Pro139. A helical transmembrane segment spans residues Arg140 to Val160. The Extracellular segment spans residues Thr161–Val197. A helical transmembrane segment spans residues Ile198–Leu218. Residues Ser219–Lys238 are Cytoplasmic-facing. The helical transmembrane segment at Thr239–Leu259 threads the bilayer. Topologically, residues Ile260–Ser272 are extracellular. Residues Asp273–Ser293 form a helical membrane-spanning segment. Residues Leu294 to Ser316 lie on the Cytoplasmic side of the membrane.

The protein belongs to the G-protein coupled receptor 1 family.

It is found in the cell membrane. Odorant receptor. The sequence is that of Olfactory receptor 10H3 (OR10H3) from Homo sapiens (Human).